The chain runs to 72 residues: Translation initiation factor IF-1 (72 aa).

Residues 1 to 72 (MAKEETIQMQ…SRARITFRAK (72 aa)) enclose the S1-like domain.

Belongs to the IF-1 family. Component of the 30S ribosomal translation pre-initiation complex which assembles on the 30S ribosome in the order IF-2 and IF-3, IF-1 and N-formylmethionyl-tRNA(fMet); mRNA recruitment can occur at any time during PIC assembly.

The protein localises to the cytoplasm. Functionally, one of the essential components for the initiation of protein synthesis. Stabilizes the binding of IF-2 and IF-3 on the 30S subunit to which N-formylmethionyl-tRNA(fMet) subsequently binds. Helps modulate mRNA selection, yielding the 30S pre-initiation complex (PIC). Upon addition of the 50S ribosomal subunit IF-1, IF-2 and IF-3 are released leaving the mature 70S translation initiation complex. This chain is Translation initiation factor IF-1, found in Nitrosospira multiformis (strain ATCC 25196 / NCIMB 11849 / C 71).